A 1531-amino-acid polypeptide reads, in one-letter code: Myosin-17 (1531 aa).

The Myosin N-terminal SH3-like domain occupies 8–57; it reads IVGSHVWIEDPGAAWIDGEVVKINGEEVHAHTTNGKTVVANIANVFPKDT. Residues 62–732 form the Myosin motor domain; that stretch reads GGVDDMTKLS…QMAELDARRA (671 aa). Residues 156 to 163 and 209 to 217 contribute to the ATP site; these read GESGAGKT and NNNSSRFGK. Actin-binding stretches follow at residues 495–529, 531–554, 589–613, and 613–635; these read LIEK…YQTF, NYKR…AGEV, FPRL…KLQL, and LQSL…KPNN. 5 IQ domains span residues 758–787, 783–812, 806–835, 831–860, and 854–883; these read LRGA…QAAA, RQAA…STIT, IRHS…MKAA, QMKA…AALS, and LQKA…AARD. The stretch at 884 to 1056 forms a coiled coil; sequence TGALREAKDK…VLRQQALAIS (173 aa). Residues 1071–1090 are disordered; that stretch reads LPRTPENGNYLNGGTKTTPD. The segment covering 1076–1090 has biased composition (polar residues); it reads ENGNYLNGGTKTTPD. A Dilute domain is found at 1159 to 1470; sequence DRIIQTIATA…IANMRVMMTE (312 aa). At serine 1517 the chain carries Phosphoserine.

Belongs to the TRAFAC class myosin-kinesin ATPase superfamily. Myosin family. Plant myosin class XI subfamily. Homodimer. Interacts with MYOB1, MYOB2 and MYOB3. Interacts with PHOX1 and PHOX2. As to expression, expressed ubiquitously.

Its subcellular location is the cytoplasm. Functionally, myosin heavy chain that is required for the cell cycle-regulated transport of various organelles and proteins for their segregation. Functions by binding with its tail domain to receptor proteins on organelles and exerting force with its N-terminal motor domain against actin filaments, thereby transporting its cargo along polarized actin cables. Involved in the tip growth of root hair cells and in the elongation of trichome stalk and branches. Plays a major role in trafficking of Golgi stacks, mitochondria and peroxisomes during root hair development. Acts as the primary contributor to ER streaming with a major role in the movement of Golgi bodies. Required for development of pavement cells, trichomes, and stigmatic papillae. Together with XI-F, required for the regulation of organ bending, such as gravitropic root bending. The protein is Myosin-17 of Arabidopsis thaliana (Mouse-ear cress).